Here is a 758-residue protein sequence, read N- to C-terminus: Ferrichrome receptor FcuA (758 aa).

Residues methionine 1–alanine 36 form the signal peptide. A TonB box motif is present at residues aspartate 66–alanine 73. In terms of domain architecture, TBDR plug spans aspartate 106 to lysine 216. The TBDR beta-barrel domain occupies threonine 221–phenylalanine 758. A TonB C-terminal box motif is present at residues tyrosine 741–phenylalanine 758.

This sequence belongs to the TonB-dependent receptor family.

It localises to the cell outer membrane. Receptor for the hydroxamate siderophore, ferrichrome. Binds also to most other ferrichrome derivatives except enantio ferrichrome and ferric rhodotorulate. The protein is Ferrichrome receptor FcuA (fcuA) of Yersinia enterocolitica.